Here is a 59-residue protein sequence, read N- to C-terminus: UPF0434 protein LHK_01103 (59 aa).

The protein belongs to the UPF0434 family.

In Laribacter hongkongensis (strain HLHK9), this protein is UPF0434 protein LHK_01103.